The sequence spans 94 residues: Aspartyl/glutamyl-tRNA(Asn/Gln) amidotransferase subunit C (94 aa).

This sequence belongs to the GatC family. In terms of assembly, heterotrimer of A, B and C subunits.

It carries out the reaction L-glutamyl-tRNA(Gln) + L-glutamine + ATP + H2O = L-glutaminyl-tRNA(Gln) + L-glutamate + ADP + phosphate + H(+). It catalyses the reaction L-aspartyl-tRNA(Asn) + L-glutamine + ATP + H2O = L-asparaginyl-tRNA(Asn) + L-glutamate + ADP + phosphate + 2 H(+). Functionally, allows the formation of correctly charged Asn-tRNA(Asn) or Gln-tRNA(Gln) through the transamidation of misacylated Asp-tRNA(Asn) or Glu-tRNA(Gln) in organisms which lack either or both of asparaginyl-tRNA or glutaminyl-tRNA synthetases. The reaction takes place in the presence of glutamine and ATP through an activated phospho-Asp-tRNA(Asn) or phospho-Glu-tRNA(Gln). The protein is Aspartyl/glutamyl-tRNA(Asn/Gln) amidotransferase subunit C of Solidesulfovibrio magneticus (strain ATCC 700980 / DSM 13731 / RS-1) (Desulfovibrio magneticus).